Consider the following 345-residue polypeptide: MPRIDADLKLDFKDVLLRPKRSSLKSRAEVDLERTFTFRNSKQTYSGIPIIVANMDTVGTFEMAAVMSQHSMFTAIHKHYSLDDWKLFATNHPECLQNVAVSSGSGQNDLEKMTSILEAVPQVKFICLDVANGYSEHFVEFVKLVRAKFPEHTIMAGNVVTGEMVEELILSGADIIKVGVGPGSVCTTRTKTGVGYPQLSAVIECADSAHGLKGHIISDGGCTCPGDVAKAFGAGADFVMLGGMFSGHTECAGEVFERNGRKLKLFYGMSSDTAMNKHAGGVAEYRASEGKTVEVPYKGDVENTILDILGGLRSTCTYVGAAKLKELSRRATFIRVTQQHNTVFS.

NADP(+)-binding positions include 26 to 27, Lys-78, 129 to 131, and 180 to 181; these read SR, DVA, and VG. 3 residues coordinate K(+): Gly-181, Gly-183, and Cys-186. Cys-186 (thioimidate intermediate) is an active-site residue. The active-site Proton donor/acceptor is Thr-188. Residue Arg-189 coordinates K(+). Residues 219 to 221, 242 to 243, 268 to 270, and 286 to 290 each bind GMP; these read DGG, GG, GMS, and RASEG. NADP(+)-binding positions include Met-269, 285-286, and 314-317; these read YR and STCT.

It belongs to the IMPDH/GMPR family. GuaC type 1 subfamily. In terms of assembly, homotetramer.

The enzyme catalyses IMP + NH4(+) + NADP(+) = GMP + NADPH + 2 H(+). Catalyzes the irreversible NADPH-dependent deamination of GMP to IMP. It functions in the conversion of nucleobase, nucleoside and nucleotide derivatives of G to A nucleotides, and in maintaining the intracellular balance of A and G nucleotides. This is GMP reductase 1 (GMPR) from Homo sapiens (Human).